We begin with the raw amino-acid sequence, 831 residues long: Pleckstrin homology-like domain family B member 1 (831 aa).

The span at 1–11 (LTLGARGRRTR) shows a compositional bias: basic residues. Residues 1-73 (LTLGARGRRT…PIPRERKNSI (73 aa)) are disordered. An Omega-N-methylarginine modification is found at Arg-6. A phosphoserine mark is found at Ser-12 and Ser-14. Thr-16 bears the Phosphothreonine mark. Phosphoserine is present on residues Ser-27, Ser-33, Ser-45, Ser-49, Ser-57, Ser-72, Ser-77, and Ser-175. Positions 39-51 (GSLTGASPRQSPH) are enriched in polar residues. Disordered stretches follow at residues 160-209 (RSGE…LQGE) and 416-465 (NGDM…QNGT). Residues 174–188 (ESMERSDEENLKEEC) are compositionally biased toward basic and acidic residues. Residues 180-306 (DEENLKEECS…TETKLFEDLE (127 aa)) adopt a coiled-coil conformation. A phosphoserine mark is found at Ser-421 and Ser-467. Residues 421 to 442 (SPLPRTRSGPLPSSSGSSSSSS) are compositionally biased toward low complexity. The tract at residues 584-603 (SMETSISTGGNSACSPDNMS) is disordered. The stretch at 610–676 (MGKIEEMEKM…QQLVEKEVKL (67 aa)) forms a coiled coil. Positions 721–824 (SKVCRGYLIK…WMDVIVTGAE (104 aa)) constitute a PH domain.

The sequence is that of Pleckstrin homology-like domain family B member 1 (Phldb1) from Rattus norvegicus (Rat).